Here is a 134-residue protein sequence, read N- to C-terminus: Large ribosomal subunit protein uL16c (134 aa).

The protein belongs to the universal ribosomal protein uL16 family. As to quaternary structure, part of the 50S ribosomal subunit.

The protein resides in the plastid. It localises to the chloroplast. The protein is Large ribosomal subunit protein uL16c of Gnetum parvifolium (Small-leaved jointfir).